We begin with the raw amino-acid sequence, 230 residues long: Urease accessory protein UreF (230 aa).

The protein belongs to the UreF family. UreD, UreF and UreG form a complex that acts as a GTP-hydrolysis-dependent molecular chaperone, activating the urease apoprotein by helping to assemble the nickel containing metallocenter of UreC. The UreE protein probably delivers the nickel.

It is found in the cytoplasm. In terms of biological role, required for maturation of urease via the functional incorporation of the urease nickel metallocenter. The chain is Urease accessory protein UreF from Chromohalobacter salexigens (strain ATCC BAA-138 / DSM 3043 / CIP 106854 / NCIMB 13768 / 1H11).